Consider the following 196-residue polypeptide: Serine/arginine-rich splicing factor RSZ22A (196 aa).

The region spanning 2–71 (SRVYVGNLDP…NGWRVEQSHN (70 aa)) is the RRM domain. Ser48 is modified (phosphoserine). Residues 58–70 (VDGKNGWRVEQSH) show a composition bias toward basic and acidic residues. The disordered stretch occupies residues 58–196 (VDGKNGWRVE…GLKDVRRSRS (139 aa)). Over residues 72-87 (RGGGGGRGGGRGGGDG) the composition is skewed to gly residues. Basic and acidic residues predominate over residues 88 to 100 (GRGRGGSDLKCYE). Residues 96 to 113 (LKCYECGESGHFARECRS) form a CCHC-type zinc finger. The span at 119-135 (GRRRSRSRSRSPPRYRK) shows a compositional bias: basic residues. Ser136, Ser144, Ser146, Ser151, Ser159, Ser170, and Ser196 each carry phosphoserine. The segment covering 139-149 (YGGRRSYSPRA) has biased composition (low complexity).

Belongs to the splicing factor SR family. RSZ subfamily. Component of the spliceosome. In terms of processing, extensively phosphorylated on serine residues in the RS domain.

The protein resides in the nucleus. Functionally, probably involved in intron recognition and spliceosome assembly. The polypeptide is Serine/arginine-rich splicing factor RSZ22A (RSZ22A) (Arabidopsis thaliana (Mouse-ear cress)).